We begin with the raw amino-acid sequence, 293 residues long: Phosphatidylcholine-sterol acyltransferase (293 aa).

Asn26 is a glycosylation site (N-linked (GlcNAc...) asparagine). Ser123 functions as the Nucleophile in the catalytic mechanism. N-linked (GlcNAc...) asparagine glycosylation occurs at Asn179. A disulfide bond links Cys220 and Cys263. The Charge relay system role is filled by Asp252. The N-linked (GlcNAc...) asparagine glycan is linked to Asn280. The active-site Charge relay system is the His284.

This sequence belongs to the AB hydrolase superfamily. Lipase family.

It is found in the secreted. It catalyses the reaction a sterol + a 1,2-diacyl-sn-glycero-3-phosphocholine = a sterol ester + a 1-acyl-sn-glycero-3-phosphocholine. APOA1 is the most potent activator in plasma. Also activated by APOE, APOC1 and APOA4. Functionally, central enzyme in the extracellular metabolism of plasma lipoproteins. Synthesized mainly in the liver and secreted into plasma where it converts cholesterol and phosphatidylcholines (lecithins) to cholesteryl esters and lysophosphatidylcholines on the surface of high and low density lipoproteins (HDLs and LDLs). The cholesterol ester is then transported back to the liver. Has a preference for plasma 16:0-18:2 or 18:O-18:2 phosphatidylcholines. Also produced in the brain by primary astrocytes, and esterifies free cholesterol on nascent APOE-containing lipoproteins secreted from glia and influences cerebral spinal fluid (CSF) APOE- and APOA1 levels. Together with APOE and the cholesterol transporter ABCA1, plays a key role in the maturation of glial-derived, nascent lipoproteins. Required for remodeling high-density lipoprotein particles into their spherical forms. The sequence is that of Phosphatidylcholine-sterol acyltransferase (LCAT) from Gerbilliscus gambianus (Gambian gerbil).